A 115-amino-acid chain; its full sequence is NADH-ubiquinone oxidoreductase chain 3 (115 aa).

The next 3 helical transmembrane spans lie at 3-23 (LMLA…IMFW), 55-75 (FFLV…LLSL), and 84-104 (LPTM…SLAY).

This sequence belongs to the complex I subunit 3 family. Core subunit of respiratory chain NADH dehydrogenase (Complex I) which is composed of 45 different subunits. Interacts with TMEM186. Interacts with TMEM242.

It localises to the mitochondrion inner membrane. It catalyses the reaction a ubiquinone + NADH + 5 H(+)(in) = a ubiquinol + NAD(+) + 4 H(+)(out). In terms of biological role, core subunit of the mitochondrial membrane respiratory chain NADH dehydrogenase (Complex I) which catalyzes electron transfer from NADH through the respiratory chain, using ubiquinone as an electron acceptor. Essential for the catalytic activity of complex I. This Papio hamadryas (Hamadryas baboon) protein is NADH-ubiquinone oxidoreductase chain 3.